The primary structure comprises 248 residues: PF03932 family protein CutC (248 aa).

Belongs to the CutC family.

The protein resides in the cytoplasm. This Porphyromonas gingivalis (strain ATCC BAA-308 / W83) protein is PF03932 family protein CutC.